A 569-amino-acid polypeptide reads, in one-letter code: MSYKIDRKTYAQTYGPTTGDRVRLADTELFIEVEKDLTTYGDEVKFGGGKVIRDGMGQSQVRRADGAVDTVITNALIVDWWGIIKADVGIKDGMIFEIGKAGNPDIQDNVDIVIGASTEVIAGEGHILTAGSIDTHIHFICPQQIETALSSGITTMLGGGTGPATGTNATTCTPGSFHISRMLQSAEAFPMNLGFFGKGNSTNEINLIDQVEAGACGLKLHEDWGTTPSTINSCLNVADKFDVQVCIHTDTLNEAGFVEDTINAIAGRTIHTFHTEGAGGGHAPDIIKICGEKNVLPSSTNPTRPYTRNTLEEHLDMLMVCHHLDSKIPEDIAFAESRIRRETIAAEDILHDLGAFSIIASDSQAMGRVGEVITRTFQTAHKMKVQRGPLSQDSDRNDNYRVKRYISKVTINPAIAHGIDKHVGSIEKGKIADLVLWKPSFFAVKPELVVKGGSIVWSQMGDANASIPTPGPVHGRPMFASFGQSLIKSSFTFLSKNSIEQNIPNKLGLQKKCIAVENTRNINKSNLKLNTKLPNISVDPQTYEVFSDGELLTCEPLDEVPMAQRYFLL.

Positions 131-569 (GSIDTHIHFI…VPMAQRYFLL (439 aa)) constitute a Urease domain. Positions 136, 138, and 219 each coordinate Ni(2+). Lys-219 is subject to N6-carboxylysine. His-221 lines the substrate pocket. Ni(2+) contacts are provided by His-248 and His-274. His-322 serves as the catalytic Proton donor. Ni(2+) is bound at residue Asp-362.

It belongs to the metallo-dependent hydrolases superfamily. Urease alpha subunit family. As to quaternary structure, heterotrimer of UreA (gamma), UreB (beta) and UreC (alpha) subunits. Three heterotrimers associate to form the active enzyme. The cofactor is Ni cation. In terms of processing, carboxylation allows a single lysine to coordinate two nickel ions.

The protein localises to the cytoplasm. The enzyme catalyses urea + 2 H2O + H(+) = hydrogencarbonate + 2 NH4(+). It participates in nitrogen metabolism; urea degradation; CO(2) and NH(3) from urea (urease route): step 1/1. The protein is Urease subunit alpha of Prochlorococcus marinus (strain AS9601).